Consider the following 152-residue polypeptide: Interleukin-3 (152 aa).

Positions Met1 to Gln19 are cleaved as a signal peptide. Residues Asn34 and Asn89 are each glycosylated (N-linked (GlcNAc...) asparagine). Cys35 and Cys103 are disulfide-bonded.

It belongs to the IL-3 family. In terms of assembly, interacts with IL3RA. Activated T-cells, mast cells, natural killer cells.

It localises to the secreted. Its function is as follows. Cytokine secreted predominantly by activated T-lymphocytes as well as mast cells and osteoblastic cells that controls the production and differentiation of hematopoietic progenitor cells into lineage-restricted cells. Also stimulates mature basophils, eosinophils, and monocytes to become functionally activated. In addition, plays an important role in neural cell proliferation and survival. Participates as well in bone homeostasis and inhibits osteoclast differentiation by preventing NF-kappa-B nuclear translocation and activation. Mechanistically, exerts its biological effects through a receptor composed of IL3RA subunit and a signal transducing subunit IL3RB. Receptor stimulation results in the rapid activation of JAK2 kinase activity leading to STAT5-mediated transcriptional program. Alternatively, contributes to cell survival under oxidative stress in non-hematopoietic systems by activating pathways mediated by PI3K/AKT and ERK. The chain is Interleukin-3 from Homo sapiens (Human).